Reading from the N-terminus, the 450-residue chain is Phosphoglucosamine mutase (450 aa).

Ser101 acts as the Phosphoserine intermediate in catalysis. Ser101, Asp241, Asp243, and Asp245 together coordinate Mg(2+). Ser101 is subject to Phosphoserine.

This sequence belongs to the phosphohexose mutase family. The cofactor is Mg(2+). Activated by phosphorylation.

It catalyses the reaction alpha-D-glucosamine 1-phosphate = D-glucosamine 6-phosphate. Catalyzes the conversion of glucosamine-6-phosphate to glucosamine-1-phosphate. This is Phosphoglucosamine mutase from Listeria monocytogenes serovar 1/2a (strain ATCC BAA-679 / EGD-e).